Consider the following 318-residue polypeptide: Large ribosomal subunit protein uL10 (318 aa).

Tyr24 carries the post-translational modification Phosphotyrosine. Thr59 carries the phosphothreonine modification. Lys264 is covalently cross-linked (Glycyl lysine isopeptide (Lys-Gly) (interchain with G-Cter in ubiquitin)). The disordered stretch occupies residues 293-318; sequence TAAPAKVEAKEESEESDEDMGFGLFD. A Glycyl lysine isopeptide (Lys-Gly) (interchain with G-Cter in SUMO1); alternate cross-link involves residue Lys298. Lys298 is covalently cross-linked (Glycyl lysine isopeptide (Lys-Gly) (interchain with G-Cter in SUMO2); alternate). The span at 303 to 312 shows a compositional bias: acidic residues; sequence EESEESDEDM. Residues Ser305 and Ser308 each carry the phosphoserine modification.

This sequence belongs to the universal ribosomal protein uL10 family. In terms of assembly, P0 forms a pentameric complex by interaction with dimers of P1 and P2. Identified in a IGF2BP1-dependent mRNP granule complex containing untranslated mRNAs. Interacts with APEX1. Interacts with FMR1. In terms of processing, ubiquitinated at Lys-264 by RNF14 and RNF25 in response to ribosome collisions (ribosome stalling).

It localises to the nucleus. The protein localises to the cytoplasm. In terms of biological role, ribosomal protein P0 is the functional equivalent of E.coli protein L10. This is Large ribosomal subunit protein uL10 (RPLP0) from Bos taurus (Bovine).